Reading from the N-terminus, the 371-residue chain is MYKNYYSNTEVYKKHKDSGSLRKKALRSRRSSFFSFFNDSSSSNGNEFIGFRRFAKAYLFGREIGSCGTDSYTPVGANVNKRRLKKEDKNDQQLWKRQHHSQGCFFPIDDDSNKQTEAAVNKFYENGEYVNQDLIFKGKVYSEESEVVDEKTAGSQNPALLKTRSISLNDIPRGTGISSVLSQVRGGSLERIIVYRYDTPERSLHKVDLFFLNYEGAQSFMRYAKTNIFKVNGVQLKPEWIFLESTYENIMKEQSVNRIIEEEKFISRCLIVKKSSTTAMPNKSNLNKGQTLENIDIQELEKDFQNFGEVLEITPIVSRKLCVSIFFYDISSAMRAMEEYEQKGSYLYNKYFKTWTIWYGKDITDQPCIDL.

It is found in the spore wall. Essential for sporulation and seems to have a role at the time of, or after, initiation of nuclear division. Appears to have a role in outer spore wall formation. The sequence is that of Sporulation-specific protein 2 (SSP2) from Saccharomyces cerevisiae (strain ATCC 204508 / S288c) (Baker's yeast).